The chain runs to 374 residues: Chorismate synthase (374 aa).

Arginine 55 lines the NADP(+) pocket. FMN-binding positions include 132 to 134 (RGS), glycine 293, 308 to 312 (KPTPS), and arginine 335.

It belongs to the chorismate synthase family. FMNH2 serves as cofactor.

The enzyme catalyses 5-O-(1-carboxyvinyl)-3-phosphoshikimate = chorismate + phosphate. It functions in the pathway metabolic intermediate biosynthesis; chorismate biosynthesis; chorismate from D-erythrose 4-phosphate and phosphoenolpyruvate: step 7/7. Its function is as follows. Catalyzes the anti-1,4-elimination of the C-3 phosphate and the C-6 proR hydrogen from 5-enolpyruvylshikimate-3-phosphate (EPSP) to yield chorismate, which is the branch point compound that serves as the starting substrate for the three terminal pathways of aromatic amino acid biosynthesis. This reaction introduces a second double bond into the aromatic ring system. The polypeptide is Chorismate synthase (Methanothermobacter thermautotrophicus (strain ATCC 29096 / DSM 1053 / JCM 10044 / NBRC 100330 / Delta H) (Methanobacterium thermoautotrophicum)).